Reading from the N-terminus, the 198-residue chain is MARMMGPRFKQSRRLGLNVCGHPKANKRMGKGLGRNDKKLTEYGMQLLEKQRLRAYYGVNEKQMHKYFEKALNNKEGLTTGDVMVRQLETRLDNLVLRASFASSIRQARQMVSHGLIRVNGKKVDIPSFQVAEGSVIELKEKSRSNELFKENYETNFAQSLPYIDKEENFKVTLTRLPERQEIPIEITDSLIVELYSR.

Residues 90 to 152 (TRLDNLVLRA…SRSNELFKEN (63 aa)) form the S4 RNA-binding domain.

Belongs to the universal ribosomal protein uS4 family. Part of the 30S ribosomal subunit. Contacts protein S5. The interaction surface between S4 and S5 is involved in control of translational fidelity.

One of the primary rRNA binding proteins, it binds directly to 16S rRNA where it nucleates assembly of the body of the 30S subunit. Functionally, with S5 and S12 plays an important role in translational accuracy. This is Small ribosomal subunit protein uS4 from Finegoldia magna (strain ATCC 29328 / DSM 20472 / WAL 2508) (Peptostreptococcus magnus).